An 84-amino-acid polypeptide reads, in one-letter code: Toxin BmKaTx13 (84 aa).

A signal peptide spans 1–19; sequence MNYLVMISFALLLMKGVES. The 63-residue stretch at 21–83 folds into the LCN-type CS-alpha/beta domain; that stretch reads RDAYIAKPEN…VPIRVPGKCH (63 aa). 4 disulfide bridges follow: cysteine 31–cysteine 82, cysteine 35–cysteine 55, cysteine 41–cysteine 65, and cysteine 45–cysteine 67. A propeptide (removed by a carboxypeptidase) is located at residue arginine 84.

This sequence belongs to the long (4 C-C) scorpion toxin superfamily. Sodium channel inhibitor family. Alpha subfamily. As to expression, expressed by the venom gland.

The protein localises to the secreted. In terms of biological role, alpha toxins bind voltage-independently at site-3 of sodium channels (Nav) and inhibit the inactivation of the activated channels, thereby blocking neuronal transmission. This toxin is active against mammals. This is Toxin BmKaTx13 from Olivierus martensii (Manchurian scorpion).